Reading from the N-terminus, the 213-residue chain is Orotate phosphoribosyltransferase (213 aa).

Lysine 26 lines the 5-phospho-alpha-D-ribose 1-diphosphate pocket. Position 34–35 (34–35 (FF)) interacts with orotate. 5-phospho-alpha-D-ribose 1-diphosphate is bound by residues 72 to 73 (YK), arginine 99, lysine 100, lysine 103, histidine 105, and 124 to 132 (DDVITAGTA). Orotate contacts are provided by threonine 128 and arginine 156.

This sequence belongs to the purine/pyrimidine phosphoribosyltransferase family. PyrE subfamily. As to quaternary structure, homodimer. The cofactor is Mg(2+).

The catalysed reaction is orotidine 5'-phosphate + diphosphate = orotate + 5-phospho-alpha-D-ribose 1-diphosphate. It functions in the pathway pyrimidine metabolism; UMP biosynthesis via de novo pathway; UMP from orotate: step 1/2. Its function is as follows. Catalyzes the transfer of a ribosyl phosphate group from 5-phosphoribose 1-diphosphate to orotate, leading to the formation of orotidine monophosphate (OMP). The protein is Orotate phosphoribosyltransferase of Klebsiella pneumoniae (strain 342).